A 283-amino-acid polypeptide reads, in one-letter code: Glutamate racemase (283 aa).

Substrate contacts are provided by residues 13 to 14 (DS) and 45 to 46 (YG). The Proton donor/acceptor role is filled by cysteine 76. 77–78 (NT) contributes to the substrate binding site. The active-site Proton donor/acceptor is the cysteine 186. Substrate is bound at residue 187–188 (TH).

This sequence belongs to the aspartate/glutamate racemases family.

It carries out the reaction L-glutamate = D-glutamate. It participates in cell wall biogenesis; peptidoglycan biosynthesis. Its function is as follows. Provides the (R)-glutamate required for cell wall biosynthesis. The polypeptide is Glutamate racemase (Microcystis aeruginosa (strain NIES-843 / IAM M-2473)).